Consider the following 306-residue polypeptide: Anamorsin homolog (306 aa).

Residues 1-25 (MVPPREDVTVRIVCERRRTAGKEAR) show a composition bias toward basic and acidic residues. Residues 1–51 (MVPPREDVTVRIVCERRRTAGKEARPPPSAKPTPGNTSSHPNAKETHRSNE) form a disordered region. The tract at residues 59-190 (KQSHRRSIMA…RRNNTTNSVA (132 aa)) is N-terminal SAM-like domain. A linker region spans residues 191-218 (TLNFASNNNNGNDLLIDEDNLLTDASNL). [2Fe-2S] cluster contacts are provided by Cys-236, Cys-242, Cys-245, and Cys-247. The tract at residues 236–247 (CSGRAPCDDCTC) is fe-S binding site A. The span at 252–265 (GAKEGNSEQPKEIK) shows a compositional bias: basic and acidic residues. The disordered stretch occupies residues 252-272 (GAKEGNSEQPKEIKSSSCGKC). The [4Fe-4S] cluster site is built by Cys-269, Cys-272, Cys-280, and Cys-283. 2 consecutive short sequence motifs (cx2C motif) follow at residues 269-272 (CGKC) and 280-283 (CASC). The fe-S binding site B stretch occupies residues 269-283 (CGKCSLGDAFRCASC).

Belongs to the anamorsin family. As to quaternary structure, monomer. Requires [2Fe-2S] cluster as cofactor. [4Fe-4S] cluster serves as cofactor.

It is found in the cytoplasm. Its subcellular location is the mitochondrion intermembrane space. Functionally, component of the cytosolic iron-sulfur (Fe-S) protein assembly (CIA) machinery. Required for the maturation of extramitochondrial Fe-S proteins. Part of an electron transfer chain functioning in an early step of cytosolic Fe-S biogenesis, facilitating the de novo assembly of a [4Fe-4S] cluster on the cytosolic Fe-S scaffold complex. Electrons are transferred from NADPH via a FAD- and FMN-containing diflavin oxidoreductase. Together with the diflavin oxidoreductase, also required for the assembly of the diferric tyrosyl radical cofactor of ribonucleotide reductase (RNR), probably by providing electrons for reduction during radical cofactor maturation in the catalytic small subunit. This is Anamorsin homolog from Phaeodactylum tricornutum (strain CCAP 1055/1).